The chain runs to 387 residues: Flap endonuclease 1 (387 aa).

The interval 1–104 is N-domain; the sequence is MGILGLSKLI…GELAKRAERR (104 aa). D34 serves as a coordination point for Mg(2+). 2 residues coordinate DNA: R47 and R70. Mg(2+) contacts are provided by D86, E158, E160, D179, and D181. The segment at 122–253 is I-domain; it reads GIEKFNRRLV…KRAIELINNY (132 aa). E158 serves as a coordination point for DNA. DNA-binding residues include G231 and D233. D233 serves as a coordination point for Mg(2+). An interaction with PCNA region spans residues 336-344; the sequence is TQVRLDSFF. Residues 345–387 form a disordered region; it reads KTLPSTPNATNAAKRKAEEAKKSANNKKAKTSGGGGGRGRRPK.

This sequence belongs to the XPG/RAD2 endonuclease family. FEN1 subfamily. In terms of assembly, interacts with PCNA. Three molecules of FEN1 bind to one PCNA trimer with each molecule binding to one PCNA monomer. PCNA stimulates the nuclease activity without altering cleavage specificity. The cofactor is Mg(2+). Post-translationally, phosphorylated. Phosphorylation upon DNA damage induces relocalization to the nuclear plasma.

It localises to the nucleus. Its subcellular location is the nucleolus. The protein resides in the nucleoplasm. The protein localises to the mitochondrion. Functionally, structure-specific nuclease with 5'-flap endonuclease and 5'-3' exonuclease activities involved in DNA replication and repair. During DNA replication, cleaves the 5'-overhanging flap structure that is generated by displacement synthesis when DNA polymerase encounters the 5'-end of a downstream Okazaki fragment. It enters the flap from the 5'-end and then tracks to cleave the flap base, leaving a nick for ligation. Also involved in the long patch base excision repair (LP-BER) pathway, by cleaving within the apurinic/apyrimidinic (AP) site-terminated flap. Acts as a genome stabilization factor that prevents flaps from equilibrating into structures that lead to duplications and deletions. Also possesses 5'-3' exonuclease activity on nicked or gapped double-stranded DNA, and exhibits RNase H activity. Also involved in replication and repair of rDNA and in repairing mitochondrial DNA. This chain is Flap endonuclease 1, found in Drosophila yakuba (Fruit fly).